The sequence spans 272 residues: Large ribosomal subunit protein uL3 (272 aa).

Residues 125–146 are disordered; the sequence is QHIGPKSHGGGGGSQPLRQTGS.

The protein belongs to the universal ribosomal protein uL3 family. As to quaternary structure, part of the 50S ribosomal subunit. Forms a cluster with proteins L14 and L19.

Functionally, one of the primary rRNA binding proteins, it binds directly near the 3'-end of the 23S rRNA, where it nucleates assembly of the 50S subunit. The sequence is that of Large ribosomal subunit protein uL3 from Metamycoplasma arthritidis (strain 158L3-1) (Mycoplasma arthritidis).